The primary structure comprises 407 residues: [Pyruvate dehydrogenase (acetyl-transferring)] kinase isozyme 2, mitochondrial (407 aa).

One can recognise a Histidine kinase domain in the interval 135-364 (LEYKDTYGDD…DAVIYLKALS (230 aa)). Phosphotyrosine is present on residues Tyr215 and Tyr216. ATP contacts are provided by residues 251–258 (ELFKNAMR), Asp290, 309–310 (ST), and 325–330 (GFGYGL). The residue at position 376 (Lys376) is an N6-succinyllysine.

The protein belongs to the PDK/BCKDK protein kinase family. Homodimer, and heterodimer with PDK1. Interacts with the pyruvate dehydrogenase complex subunit DLAT, and is part of the multimeric pyruvate dehydrogenase complex that contains multiple copies of pyruvate dehydrogenase (E1), dihydrolipoamide acetyltransferase (DLAT, E2) and lipoamide dehydrogenase (DLD, E3). Expressed in many tissues, with the highest level in heart and skeletal muscle, intermediate levels in brain, kidney, pancreas and liver, and low levels in placenta and lung.

It localises to the mitochondrion matrix. The enzyme catalyses L-seryl-[pyruvate dehydrogenase E1 alpha subunit] + ATP = O-phospho-L-seryl-[pyruvate dehydrogenase E1 alpha subunit] + ADP + H(+). Activity is enhanced by binding to the pyruvate dehydrogenase subunit DLAT. Inhibited by ADP and pyruvate; these compounds interfere with DLAT binding and thereby inhibit kinase activity. Inhibited by dichloroacetate. Inhibited by AZD7545; this compound interferes with DLAT binding and thereby inhibits kinase activity. Its function is as follows. Kinase that plays a key role in the regulation of glucose and fatty acid metabolism and homeostasis via phosphorylation of the pyruvate dehydrogenase subunits PDHA1 and PDHA2. This inhibits pyruvate dehydrogenase activity, and thereby regulates metabolite flux through the tricarboxylic acid cycle, down-regulates aerobic respiration and inhibits the formation of acetyl-coenzyme A from pyruvate. Inhibition of pyruvate dehydrogenase decreases glucose utilization and increases fat metabolism. Mediates cellular responses to insulin. Plays an important role in maintaining normal blood glucose levels and in metabolic adaptation to nutrient availability. Via its regulation of pyruvate dehydrogenase activity, plays an important role in maintaining normal blood pH and in preventing the accumulation of ketone bodies under starvation. Plays a role in the regulation of cell proliferation and in resistance to apoptosis under oxidative stress. Plays a role in p53/TP53-mediated apoptosis. The polypeptide is [Pyruvate dehydrogenase (acetyl-transferring)] kinase isozyme 2, mitochondrial (PDK2) (Homo sapiens (Human)).